The chain runs to 486 residues: Corytuberine synthase (486 aa).

Residues 6-21 (ALFSLIPVILVFILLL) traverse the membrane as a helical segment. Cys-428 contributes to the heme binding site.

Belongs to the cytochrome P450 family. Heme serves as cofactor.

It localises to the endoplasmic reticulum membrane. It catalyses the reaction (S)-reticuline + reduced [NADPH--hemoprotein reductase] + O2 = (S)-corytuberine + oxidized [NADPH--hemoprotein reductase] + 2 H2O + 2 H(+). Inhibited by ketoconazole. Functionally, cytochrome P450 that catalyzes an intramolecular C-C phenol coupling of (S)-reticuline in magnoflorine biosynthesis. Catalyzes the formation of (S)-corytuberine from (S)-reticuline, and also, with a lover efficiency, the 4'-O-demethylation of codamine to produce orientaline, and subsequent C-C-phenol coupling of orientaline. Can also use (R,S)-norreticuline, (R,S)-orientaline, (S)-N-methylcoclaurine and (S)-coclaurine as substrates, but not (R,S)-6-O-methyllaudanosoline, (R,S)-6-O-methylnorlaudanosoline, (R,S)-laudanine, (R,S)-norlaudanine, (R,S)-4'-O-methyllaudanosoline, (R,S)-pseudocodamine, (R,S)-norpseudocodamine, (R,S)-laudanosine, (R,S)-norlaudanosine, (R,S)-laudanosoline or (R,S)-norlaudanosoline. The protein is Corytuberine synthase of Coptis japonica (Japanese goldthread).